The sequence spans 417 residues: MKSIYVQVLIAIVLGVLVGAIWPQIGVALKPLGDGFIKLIKLVIAPVIFCTVAGGIARMGDMKAFGRVGVKALIYFEVVSTLALVIGLVVGRLIQPGAGFNIDPATLDASIAAGYVEKAQHGEGMVAYLLHLIPDTFIGAFADGNLLQVLVIAILTGFACVRMGDFGEKVAHVLDETSKLFFGIIHIVVRLAPIGAFGAMGFTIGKYGVEALVQLGALVATFYVTSLLFVLVVLGGIAWVSGFSIFRFLAYIREELLIVLGTSSSESVLPQMMEKLENAGARRSVVGLVIPTGYSFNLDGTNIYMTLATLFLAQATNTPLSLGQELALLGVAMLTSKGASGVTGAGFITLAATLAVVPDIPIAALAILVGVDRFMSECRALTNLVGNGVATLVVARWEGALDRQRLDRVLRGAPATE.

Helical transmembrane passes span 4–26 (IYVQ…PQIG), 41–60 (KLVI…ARMG), 72–94 (ALIY…GRLI), 137–159 (FIGA…TGFA), 180–202 (LFFG…AMGF), 217–239 (ALVA…GIAW), 285–307 (VVGL…YMTL), and 347–369 (FITL…AILV).

The protein belongs to the dicarboxylate/amino acid:cation symporter (DAACS) (TC 2.A.23) family.

It localises to the cell inner membrane. In terms of biological role, responsible for the transport of dicarboxylates such as succinate, fumarate, and malate from the periplasm across the membrane. This Caulobacter vibrioides (strain ATCC 19089 / CIP 103742 / CB 15) (Caulobacter crescentus) protein is C4-dicarboxylate transport protein.